Consider the following 127-residue polypeptide: Protein translocase subunit SecE (127 aa).

3 helical membrane passes run 16-36, 42-62, and 98-118; these read IAKW…NHYY, IFQN…IFLT, and IIVT…LIWF.

Belongs to the SecE/SEC61-gamma family. In terms of assembly, component of the Sec protein translocase complex. Heterotrimer consisting of SecY, SecE and SecG subunits. The heterotrimers can form oligomers, although 1 heterotrimer is thought to be able to translocate proteins. Interacts with the ribosome. Interacts with SecDF, and other proteins may be involved. Interacts with SecA.

It is found in the cell membrane. In terms of biological role, essential subunit of the Sec protein translocation channel SecYEG. Clamps together the 2 halves of SecY. May contact the channel plug during translocation. The polypeptide is Protein translocase subunit SecE (Buchnera aphidicola subsp. Baizongia pistaciae (strain Bp)).